The sequence spans 881 residues: Sodium/sulfate cotransporter 1 (881 aa).

6 helical membrane-spanning segments follow: residues 8 to 28, 31 to 51, 61 to 81, 107 to 127, 140 to 160, and 186 to 206; these read GIVA…DWVG, ITFT…VTVA, GLLT…TGGL, MVLS…PILI, LLIP…IGTS, and IFDI…FILL. RCK C-terminal domains follow at residues 212-296, 318-402, 407-492, and 498-584; these read LPGN…EYGL, VFSA…IKTN, LHAV…FPGL, and EQVD…DKSF. Transmembrane regions (helical) follow at residues 601 to 621, 625 to 645, 658 to 678, 684 to 704, 775 to 795, and 803 to 823; these read MIIG…GGLK, YIHL…TGCM, VYLT…TGVA, AIIS…AIYI, FAIV…FILV, and VWIV…LYFL. The tract at residues 854–881 is disordered; it reads SLRRQVSHTRTDDSGSSGSPLPAPKIVA.

The protein belongs to the divalent anion:Na+ symporter (DASS) superfamily. Na+/sulfate symporter (TC 2.A.47.4) family.

Its subcellular location is the cell membrane. Its function is as follows. Na(+)/sulfate cotransporter with a probable high-affinity for sulfate and a proteasome dependent turnover. The sequence is that of Sodium/sulfate cotransporter 1 (SLT1) from Chlamydomonas reinhardtii (Chlamydomonas smithii).